Reading from the N-terminus, the 151-residue chain is Large ribosomal subunit protein bL9 (151 aa).

This sequence belongs to the bacterial ribosomal protein bL9 family.

Its function is as follows. Binds to the 23S rRNA. The protein is Large ribosomal subunit protein bL9 of Bordetella bronchiseptica (strain ATCC BAA-588 / NCTC 13252 / RB50) (Alcaligenes bronchisepticus).